The primary structure comprises 346 residues: GTPase Obg (346 aa).

Positions 1-158 (MFVDECVVKL…GTYRLVLKSI (158 aa)) constitute an Obg domain. Residues 159–332 (ADVGLVGFPN…LKKELLKRVT (174 aa)) form the OBG-type G domain. Residues 165–172 (GFPNAGKS), 190–194 (FTTLH), 216–219 (DVPG), 286–289 (NKMD), and 313–315 (SCL) contribute to the GTP site. Residues S172 and T192 each contribute to the Mg(2+) site.

This sequence belongs to the TRAFAC class OBG-HflX-like GTPase superfamily. OBG GTPase family. Monomer. Mg(2+) is required as a cofactor.

The protein localises to the cytoplasm. Its function is as follows. An essential GTPase which binds GTP, GDP and possibly (p)ppGpp with moderate affinity, with high nucleotide exchange rates and a fairly low GTP hydrolysis rate. Plays a role in control of the cell cycle, stress response, ribosome biogenesis and in those bacteria that undergo differentiation, in morphogenesis control. This is GTPase Obg from Opitutus terrae (strain DSM 11246 / JCM 15787 / PB90-1).